The primary structure comprises 979 residues: MPTPVTTARECLTEEAARALDDAVVVARRRSHAQTTSLHAVSALLAMPSSILREVCVSRAARSVPYSSRLQFRALELCVGVSLDRLPSSKSPATEEDPPVSNSLMAAIKRSQANQRRHPESYHLQQIHASNNGGGGCQTTVLKVELKYFILSILDDPIVNRVFGEAGFRSSEIKLDVLHPPVTQLSSRFSRGRCPPLFLCNLPNSDPNREFPFSGSSGFDENSRRIGEVLGRKDKKNPLLIGNCANEALKTFTDSINSGKLGFLQMDISGLSLISIEKEISEILADGSKNEEEIRMKVDDLGRTVEQSGSKSGIVLNLGELKVLTSEANAALEILVSKLSDLLKHESKQLSFIGCVSSNETYTKLIDRFPTIEKDWDLHVLPITASTKPSTQGVYPKSSLMGSFVPFGGFFSSTSNFRVPLSSTVNQTLSRCHLCNEKYLQEVAAVLKAGSSLSLADKCSEKLAPWLRAIETKEDKGITGSSKALDDANTSASQTAALQKKWDNICQSIHHTPAFPKLGFQSVSPQFPVQTEKSVRTPTSYLETPKLLNPPISKPKPMEDLTASVTNRTVSLPLSCVTTDFGLGVIYASKNQESKTTREKPMLVTLNSSLEHTYQKDFKSLREILSRKVAWQTEAVNAISQIICGCKTDSTRRNQASGIWLALLGPDKVGKKKVAMTLSEVFFGGKVNYICVDFGAEHCSLDDKFRGKTVVDYVTGELSRKPHSVVLLENVEKAEFPDQMRLSEAVSTGKIRDLHGRVISMKNVIVVVTSGIAKDNATDHVIKPVKFPEEQVLSARSWKLQIKLGDATKFGVNKRKYELETAQRAVKVQRSYLDLNLPVNETEFSPDHEAEDRDAWFDEFIEKVDGKVTFKPVDFDELAKNIQEKIGSHFERCFGSETHLELDKEVILQILAASWSSLSSGEEEGRTIVDQWMQTVLARSFAEAKQKYGSNPMLGVKLVASSSGLASGVELPAKVDVIW.

The region spanning 8-190 (ARECLTEEAA…PVTQLSSRFS (183 aa)) is the Clp R domain. 2 repeat regions span residues 12-86 (LTEE…LDRL) and 100-190 (VSNS…SRFS). The short motif at 833–837 (LDLNL) is the EAR element.

The protein belongs to the ClpA/ClpB family. As to quaternary structure, interacts with TPL/TPR in an EAR-motif dependent manner. Interacts with TPR3. Interacts with MAX2 and TPR2. Interacts with D14. The interaction with D14 occurs in the presence of (2'R) stereoisomers of strigolactones, but not (2'S) stereoisomers. Ubiquitinated upon strigolactone treatment. Probable proteolytic target of SCF(MAX2)-mediated stigolactone signaling. As to expression, detected in roots, seedlings and axillary branches. Expressed in the primary rosette buds and expanding leaves of adult rosettes, the vasculature of the hypocotyls, cotyledons, and mature roots, and in the midvein and petioles of young leaves.

Its subcellular location is the nucleus. In terms of biological role, probable component of a transcriptional corepressor complex involved in branching control. Regulates cotyledon expansion and lateral root growth, but not germination or hypocotyl elongation. Promotes auxin transport and PIN1 accumulation in the stem and represses BRC1/TCP18 expression in axillary buds. The chain is Protein SMAX1-LIKE 6 from Arabidopsis thaliana (Mouse-ear cress).